The primary structure comprises 99 residues: Leydig cell tumor 10 kDa protein homolog (99 aa).

The tract at residues 1–36 (MAQGQRKFQAHKPAKSKTAAAASEKNRGPRKGGRVI) is disordered.

The protein belongs to the UPF0390 family.

In terms of biological role, may have a potential role in hypercalcemia of malignancy. The chain is Leydig cell tumor 10 kDa protein homolog (C19orf53) from Homo sapiens (Human).